The chain runs to 882 residues: Ion channel DMI1 (882 aa).

Positions 1-122 (MAKSNEESSN…PSSSSITKQQ (122 aa)) are disordered. Polar residues predominate over residues 48–62 (TSTTKTDFSEQQWNY). Positions 78–95 (PPPPPSKPPVNLIPPHPR) are enriched in pro residues. Over residues 107 to 117 (SSLLPQPSSSS) the composition is skewed to low complexity. Helical transmembrane passes span 129 to 149 (SPIF…SAYL), 192 to 212 (TIAL…YKYL), 255 to 275 (LALL…LYAV), and 307 to 327 (IVSV…LGLV). RCK N-terminal domains follow at residues 348-489 (RNHV…ETVV) and 608-757 (PEKI…DKSI). A coiled-coil region spans residues 378–403 (VIVVLAEKEKEEMEMDIAKLEFDFMG).

Belongs to the castor/pollux (TC 1.A.1.23) family. As to quaternary structure, interacts (via c-terminus) with CNGC15A, CNGC15B and CNGC15C (via N-terminus). The Nod factor has no effect on these interactions, implying that the complex is maintained after activation. As to expression, mainly expressed in roots and nodules. Also detected in pods, flowers, leaves, and stems.

It localises to the nucleus membrane. Its function is as follows. Required for early signal transduction events leading to endosymbiosis. Acts early in a signal transduction chain leading from the perception of Nod factor to the activation of calcium spiking. Also involved in mycorrhizal symbiosis. May be involved in the regulation of the calcium channel responsible for calcium spiking by mobilizing another cation, and thereby altering the membrane potential. This Medicago truncatula (Barrel medic) protein is Ion channel DMI1.